Here is a 252-residue protein sequence, read N- to C-terminus: Vitamin B12 import ATP-binding protein BtuD (252 aa).

One can recognise an ABC transporter domain in the interval 2 to 237 (IQIKSLSVGA…EQLESVFNTQ (236 aa)). 30–37 (GPNGSGKS) serves as a coordination point for ATP.

Belongs to the ABC transporter superfamily. Vitamin B12 importer (TC 3.A.1.13.1) family. As to quaternary structure, the complex is composed of two ATP-binding proteins (BtuD), two transmembrane proteins (BtuC) and a solute-binding protein (BtuF).

Its subcellular location is the cell inner membrane. It catalyses the reaction an R-cob(III)alamin(out) + ATP + H2O = an R-cob(III)alamin(in) + ADP + phosphate + H(+). Its function is as follows. Part of the ABC transporter complex BtuCDF involved in vitamin B12 import. Responsible for energy coupling to the transport system. This chain is Vitamin B12 import ATP-binding protein BtuD, found in Vibrio atlanticus (strain LGP32) (Vibrio splendidus (strain Mel32)).